The sequence spans 458 residues: Homogentisate 1,2-dioxygenase (458 aa).

His-308 functions as the Proton acceptor in the catalytic mechanism. Residues His-351 and Glu-357 each coordinate Fe cation. Positions 366 and 387 each coordinate homogentisate. His-387 is a binding site for Fe cation.

This sequence belongs to the homogentisate dioxygenase family. Hexamer; dimer of trimers. Fe cation serves as cofactor.

It carries out the reaction homogentisate + O2 = 4-maleylacetoacetate + H(+). It functions in the pathway amino-acid degradation; L-phenylalanine degradation; acetoacetate and fumarate from L-phenylalanine: step 4/6. Its function is as follows. Involved in the catabolism of homogentisate (2,5-dihydroxyphenylacetate or 2,5-OH-PhAc), a central intermediate in the degradation of phenylalanine and tyrosine. Catalyzes the oxidative ring cleavage of the aromatic ring of homogentisate to yield maleylacetoacetate. This chain is Homogentisate 1,2-dioxygenase, found in Xanthomonas axonopodis pv. citri (strain 306).